We begin with the raw amino-acid sequence, 316 residues long: Ribosomal RNA small subunit methyltransferase H (316 aa).

S-adenosyl-L-methionine-binding positions include 35–37 (AGH), aspartate 55, phenylalanine 84, aspartate 105, and glutamine 112.

Belongs to the methyltransferase superfamily. RsmH family.

It localises to the cytoplasm. It carries out the reaction cytidine(1402) in 16S rRNA + S-adenosyl-L-methionine = N(4)-methylcytidine(1402) in 16S rRNA + S-adenosyl-L-homocysteine + H(+). Its function is as follows. Specifically methylates the N4 position of cytidine in position 1402 (C1402) of 16S rRNA. This is Ribosomal RNA small subunit methyltransferase H from Streptococcus pneumoniae (strain JJA).